Consider the following 572-residue polypeptide: Proline--tRNA ligase (572 aa).

This sequence belongs to the class-II aminoacyl-tRNA synthetase family. ProS type 1 subfamily. In terms of assembly, homodimer.

The protein resides in the cytoplasm. It carries out the reaction tRNA(Pro) + L-proline + ATP = L-prolyl-tRNA(Pro) + AMP + diphosphate. Its function is as follows. Catalyzes the attachment of proline to tRNA(Pro) in a two-step reaction: proline is first activated by ATP to form Pro-AMP and then transferred to the acceptor end of tRNA(Pro). As ProRS can inadvertently accommodate and process non-cognate amino acids such as alanine and cysteine, to avoid such errors it has two additional distinct editing activities against alanine. One activity is designated as 'pretransfer' editing and involves the tRNA(Pro)-independent hydrolysis of activated Ala-AMP. The other activity is designated 'posttransfer' editing and involves deacylation of mischarged Ala-tRNA(Pro). The misacylated Cys-tRNA(Pro) is not edited by ProRS. In Pectobacterium atrosepticum (strain SCRI 1043 / ATCC BAA-672) (Erwinia carotovora subsp. atroseptica), this protein is Proline--tRNA ligase.